The following is a 508-amino-acid chain: MADGPVAELLLRRLEASDGGLDSAELAAELGMEHQAVVGAVKSLQALGEVIEAELRSTKRWELTAEGEEIAREGSHEARVFRSIPPEGLAQSELMRLPSGKVGFSKAMSNKWIRVDKSAADGPRVFRVVDSMEDEVQRRLQLVRGGQAEKLGEKERSELRKRKLLAEVILKTYWVSKGSAFSTSISKQETELSPEMISSGSWRDRPFKPYNFLAHGVLPDSGHLHPLLKVRSQFRQIFLEMGFTEMPTDNFIESSFWNFDALFQPQQHPARDQHDTFFLRDPAEALQLPMDYVQRVKRTHSQGGYGSQGYKYNWKLDEARKNLLRTHTTSASARALYRLAQKKPFTPVKYFSIDRVFRNETLDATHLAEFHQIEGVVADHGLTLGHLMGVLREFFTKLGITQLRFKPAYNPYTEPSMEVFSYHQGLKKWVEVGNSGVFRPEMLLPMGLPENVSVIAWGLSLERPTMIKYGINNIRELVGHKVNLQMVYDSPLCRLDAEPRPPPTQEAA.

Ala2 carries the N-acetylalanine modification. Position 190 is a phosphothreonine (Thr190). A phosphoserine mark is found at Ser193 and Ser301. Lys311 carries the post-translational modification N6-acetyllysine. Residues Thr329, 372 to 374 (QIE), and Tyr412 contribute to the L-phenylalanine site. Position 414 (Glu414) interacts with Mg(2+). Phe438 provides a ligand contact to L-phenylalanine.

This sequence belongs to the class-II aminoacyl-tRNA synthetase family. Phe-tRNA synthetase alpha subunit type 2 subfamily. In terms of assembly, heterotetramer; dimer of two heterodimers formed by FARSA and FARSB. Mg(2+) is required as a cofactor.

Its subcellular location is the cytoplasm. It catalyses the reaction tRNA(Phe) + L-phenylalanine + ATP = L-phenylalanyl-tRNA(Phe) + AMP + diphosphate + H(+). This is Phenylalanine--tRNA ligase alpha subunit (FARSA) from Pongo abelii (Sumatran orangutan).